The chain runs to 174 residues: Ubiquitin-like protein 4B (174 aa).

One can recognise a Ubiquitin-like domain in the interval M1–K76. Residues E141–A156 are compositionally biased toward basic and acidic residues. A disordered region spans residues E141–Q174. Positions D163–Q174 are enriched in acidic residues.

Its subcellular location is the cytoplasm. This Homo sapiens (Human) protein is Ubiquitin-like protein 4B (UBL4B).